We begin with the raw amino-acid sequence, 88 residues long: Putative carnobacteriocin-BM1 immunity protein (88 aa).

In terms of biological role, could impart immunity to carnobacteriocin-BM1 to naturally sensitive host strains. The protein is Putative carnobacteriocin-BM1 immunity protein of Carnobacterium maltaromaticum (Carnobacterium piscicola).